The primary structure comprises 473 residues: Inactive FRIGIDA-like protein 2 (473 aa).

2 coiled-coil regions span residues 3 to 35 and 306 to 361; these read AAESIAASINQIDEKKQKLKKAFDDLQAHRSLL and SLKV…RATK. A disordered region spans residues 356-384; the sequence is RKRATKFNSPANPQQPQEQKVDNKRPRVA. A compositionally biased stretch (polar residues) spans 361-373; sequence KFNSPANPQQPQE.

Belongs to the Frigida family. As to expression, expressed at low levels throughout the plant, with slightly higher expression in developing seeds and the highest expression in pollen.

Its function is as follows. Inactive FRIGIDA-like 2 protein. The polypeptide is Inactive FRIGIDA-like protein 2 (FRL2) (Arabidopsis thaliana (Mouse-ear cress)).